Here is a 231-residue protein sequence, read N- to C-terminus: Lipoprotein-releasing system ATP-binding protein LolD (231 aa).

Residues 6-230 (LSCKNVSKKY…DGELELVINS (225 aa)) enclose the ABC transporter domain. Residue 42 to 49 (GLSGSGKT) coordinates ATP.

This sequence belongs to the ABC transporter superfamily. Lipoprotein translocase (TC 3.A.1.125) family. In terms of assembly, the complex is composed of two ATP-binding proteins (LolD) and two transmembrane proteins (LolC and LolE).

The protein resides in the cell inner membrane. In terms of biological role, part of the ABC transporter complex LolCDE involved in the translocation of mature outer membrane-directed lipoproteins, from the inner membrane to the periplasmic chaperone, LolA. Responsible for the formation of the LolA-lipoprotein complex in an ATP-dependent manner. This is Lipoprotein-releasing system ATP-binding protein LolD from Francisella tularensis subsp. tularensis (strain FSC 198).